A 765-amino-acid chain; its full sequence is Leucine-rich repeat and calponin homology domain-containing protein 2 (765 aa).

2 disordered regions span residues Met-1–Gly-39 and Leu-55–Thr-76. LRR repeat units lie at residues Ser-89–Leu-110, Asp-112–Phe-133, Pro-135–Leu-156, Met-158–Leu-179, Pro-180–Leu-201, Asp-203–Leu-224, Ser-226–Pro-248, Leu-249–Leu-269, and His-271–Lys-292. The interval Leu-316–Gln-401 is disordered. The span at Ser-378–Ser-388 shows a compositional bias: basic and acidic residues. Positions Ser-438 to Asp-472 form a coiled coil. Disordered stretches follow at residues Arg-498–Glu-552 and Lys-565–Ala-628. Over residues Gln-503–Ser-512 the composition is skewed to basic and acidic residues. 2 stretches are compositionally biased toward polar residues: residues Ser-518–Glu-529 and Asp-584–Ser-595. The region spanning Leu-642–Pro-755 is the Calponin-homology (CH) domain.

Functionally, may play a role in the organization of the cytoskeleton. The sequence is that of Leucine-rich repeat and calponin homology domain-containing protein 2 (LRCH2) from Homo sapiens (Human).